The sequence spans 444 residues: Serine--tRNA ligase (444 aa).

Position 248-250 (248-250) interacts with L-serine; it reads TSE. 279–281 serves as a coordination point for ATP; the sequence is RSE. E302 is a binding site for L-serine. 366-369 provides a ligand contact to ATP; the sequence is EISS. S401 is an L-serine binding site.

It belongs to the class-II aminoacyl-tRNA synthetase family. Type-1 seryl-tRNA synthetase subfamily. As to quaternary structure, homodimer. The tRNA molecule binds across the dimer.

It localises to the cytoplasm. The enzyme catalyses tRNA(Ser) + L-serine + ATP = L-seryl-tRNA(Ser) + AMP + diphosphate + H(+). The catalysed reaction is tRNA(Sec) + L-serine + ATP = L-seryl-tRNA(Sec) + AMP + diphosphate + H(+). It functions in the pathway aminoacyl-tRNA biosynthesis; selenocysteinyl-tRNA(Sec) biosynthesis; L-seryl-tRNA(Sec) from L-serine and tRNA(Sec): step 1/1. Catalyzes the attachment of serine to tRNA(Ser). Is also able to aminoacylate tRNA(Sec) with serine, to form the misacylated tRNA L-seryl-tRNA(Sec), which will be further converted into selenocysteinyl-tRNA(Sec). This chain is Serine--tRNA ligase, found in Polaromonas naphthalenivorans (strain CJ2).